The sequence spans 257 residues: Imidazole glycerol phosphate synthase subunit HisF (257 aa).

Active-site residues include Asp11 and Asp130.

This sequence belongs to the HisA/HisF family. Heterodimer of HisH and HisF.

The protein resides in the cytoplasm. The enzyme catalyses 5-[(5-phospho-1-deoxy-D-ribulos-1-ylimino)methylamino]-1-(5-phospho-beta-D-ribosyl)imidazole-4-carboxamide + L-glutamine = D-erythro-1-(imidazol-4-yl)glycerol 3-phosphate + 5-amino-1-(5-phospho-beta-D-ribosyl)imidazole-4-carboxamide + L-glutamate + H(+). The protein operates within amino-acid biosynthesis; L-histidine biosynthesis; L-histidine from 5-phospho-alpha-D-ribose 1-diphosphate: step 5/9. Functionally, IGPS catalyzes the conversion of PRFAR and glutamine to IGP, AICAR and glutamate. The HisF subunit catalyzes the cyclization activity that produces IGP and AICAR from PRFAR using the ammonia provided by the HisH subunit. This chain is Imidazole glycerol phosphate synthase subunit HisF, found in Aliivibrio salmonicida (strain LFI1238) (Vibrio salmonicida (strain LFI1238)).